Here is a 359-residue protein sequence, read N- to C-terminus: tRNA-specific 2-thiouridylase MnmA (359 aa).

ATP is bound by residues 6–13 and Leu32; that span reads AMSGGVDS. Residue Cys101 is the Nucleophile of the active site. A disulfide bond links Cys101 and Cys193. Gly125 lines the ATP pocket. Residues 143-145 are interaction with tRNA; the sequence is KDQ. The active-site Cysteine persulfide intermediate is Cys193.

This sequence belongs to the MnmA/TRMU family.

The protein resides in the cytoplasm. It catalyses the reaction S-sulfanyl-L-cysteinyl-[protein] + uridine(34) in tRNA + AH2 + ATP = 2-thiouridine(34) in tRNA + L-cysteinyl-[protein] + A + AMP + diphosphate + H(+). In terms of biological role, catalyzes the 2-thiolation of uridine at the wobble position (U34) of tRNA, leading to the formation of s(2)U34. The chain is tRNA-specific 2-thiouridylase MnmA from Mycobacterium sp. (strain JLS).